The primary structure comprises 119 residues: Protein TusC (119 aa).

The protein belongs to the DsrF/TusC family. As to quaternary structure, heterohexamer, formed by a dimer of trimers. The hexameric TusBCD complex contains 2 copies each of TusB, TusC and TusD. The TusBCD complex interacts with TusE.

The protein localises to the cytoplasm. Its function is as follows. Part of a sulfur-relay system required for 2-thiolation of 5-methylaminomethyl-2-thiouridine (mnm(5)s(2)U) at tRNA wobble positions. The sequence is that of Protein TusC from Pectobacterium carotovorum subsp. carotovorum (strain PC1).